A 310-amino-acid polypeptide reads, in one-letter code: tRNA dimethylallyltransferase (310 aa).

ATP is bound at residue 14-21 (GPTASGKT). 16–21 (TASGKT) lines the substrate pocket. An interaction with substrate tRNA region spans residues 39–42 (DSMQ).

It belongs to the IPP transferase family. As to quaternary structure, monomer. It depends on Mg(2+) as a cofactor.

It catalyses the reaction adenosine(37) in tRNA + dimethylallyl diphosphate = N(6)-dimethylallyladenosine(37) in tRNA + diphosphate. Its function is as follows. Catalyzes the transfer of a dimethylallyl group onto the adenine at position 37 in tRNAs that read codons beginning with uridine, leading to the formation of N6-(dimethylallyl)adenosine (i(6)A). This chain is tRNA dimethylallyltransferase, found in Corynebacterium jeikeium (strain K411).